The following is a 61-amino-acid chain: Large ribosomal subunit protein bL33 (61 aa).

Belongs to the bacterial ribosomal protein bL33 family.

The polypeptide is Large ribosomal subunit protein bL33 (Amoebophilus asiaticus (strain 5a2)).